Consider the following 99-residue polypeptide: C-C motif chemokine 17 (99 aa).

The signal sequence occupies residues 1–23; it reads MMSLKLLLLVMLLLGASLQVTHA. Intrachain disulfides connect Cys-33/Cys-57 and Cys-34/Cys-73.

The protein belongs to the intercrine beta (chemokine CC) family. As to expression, expressed in thymus and also in spleen, lung, lymph node, kidney, small intestine, colon and skin.

Its subcellular location is the secreted. In terms of biological role, chemokine, which displays chemotactic activity for T lymphocytes, preferentially Th2 cells, but not monocytes or granulocytes. Therefore plays an important role in a wide range of inflammatory and immunological processes. Acts by binding to CCR4 at T-cell surface. Mediates GM-CSF/CSF2-driven pain and inflammation. In the brain, required to maintain the typical, highly branched morphology of hippocampal microglia under homeostatic conditions. May be important for the appropriate adaptation of microglial morphology and synaptic plasticity to acute lipopolysaccharide (LPS)-induced neuroinflammation. Plays a role in wound healing, mainly by inducing fibroblast migration into the wound. The protein is C-C motif chemokine 17 (CCL17) of Felis catus (Cat).